The chain runs to 842 residues: Glycogen phosphorylase, muscle form (842 aa).

S2 carries the post-translational modification N-acetylserine. S15 is modified (phosphoserine; by PHK; in form phosphorylase A). D43 and Y76 together coordinate AMP. Residues Y204 and Y227 each carry the phosphotyrosine modification. Residue 310-319 (RRFKSSKFGC) participates in AMP binding. S430 bears the Phosphoserine mark. At Y473 the chain carries Phosphotyrosine. N6-(pyridoxal phosphate)lysine is present on K681. 2 positions are modified to phosphoserine: S747 and S748.

Belongs to the glycogen phosphorylase family. Homodimer. Homotetramer; to form the enzymatically active phosphorylase A. The cofactor is pyridoxal 5'-phosphate. Post-translationally, phosphorylation of Ser-15 converts phosphorylase B (unphosphorylated) to phosphorylase A.

It catalyses the reaction [(1-&gt;4)-alpha-D-glucosyl](n) + phosphate = [(1-&gt;4)-alpha-D-glucosyl](n-1) + alpha-D-glucose 1-phosphate. Allosterically regulated through the non-covalent binding of metabolites, being activated by AMP and inhibited by ATP, ADP, and glucose-6-phosphate. The activity is also controlled by post-translational modifications including phosphorylation. In terms of biological role, allosteric enzyme that catalyzes the rate-limiting step in glycogen catabolism, the phosphorolytic cleavage of glycogen to produce glucose-1-phosphate, and plays a central role in maintaining cellular and organismal glucose homeostasis. This Bos taurus (Bovine) protein is Glycogen phosphorylase, muscle form.